A 242-amino-acid polypeptide reads, in one-letter code: Probable transcriptional regulatory protein NMA1902 (242 aa).

This sequence belongs to the TACO1 family.

It is found in the cytoplasm. The chain is Probable transcriptional regulatory protein NMA1902 from Neisseria meningitidis serogroup A / serotype 4A (strain DSM 15465 / Z2491).